The primary structure comprises 389 residues: MAATTAETRVFLEVRGQLQSALLILGEPKEGGMPMNISIMPSSLQMKTPEGCTEIQLPAEVRLVPSSCRGLQFVAGDGLHLRLQAHAELGTKLISMFNQSLQAQECCTFYCQSCGEVIINDRKLLRVLPLPSENWGALVGEWCCHPDPFANKPLHPQENDCFIGDSFFLVNLRTSLWQQRPELSPVEMCCVSSDNHCKLEPKANTKVICKRCKVMLGETVSSETTKFYMTEIIIQSSERSFPIIPRPRFVQSVIAQCLVQLSSARSTFRFMIQGQDDKVYILLWLLNSDSLVIESLRNSKYIKKFPLLEDTLKADSSSAWSAVKVLYQPCIKSRNEKLISSWESDISVHSLTLPSATCLELLLILSKSNANLPSSLRHMNSFQVAFLKI.

At Ala-2 the chain carries N-acetylalanine. A BRAT1-like motif motif is present at residues 129-159 (PLPSENWGALVGEWCCHPDPFANKPLHPQEN). Cys-144 is a binding site for Zn(2+). The segment at 235–257 (QSSERSFPIIPRPRFVQSVIAQC) is interaction with UBE2C. The interval 353 to 389 (LPSATCLELLLILSKSNANLPSSLRHMNSFQVAFLKI) is HECT-like.

As to quaternary structure, interacts with UBE2C/UbcH10 (E2 ubiquitin-conjugating enzyme). In vitro, interacts with cyclin-B. Ubiquitinated by UBCH10 (E2 ubiquitin-conjugating enzyme).

The protein resides in the cytoplasm. The catalysed reaction is S-ubiquitinyl-[E2 ubiquitin-conjugating enzyme]-L-cysteine + [acceptor protein]-L-lysine = [E2 ubiquitin-conjugating enzyme]-L-cysteine + N(6)-ubiquitinyl-[acceptor protein]-L-lysine.. It functions in the pathway protein modification; protein ubiquitination. Its function is as follows. E3 ubiquitin-protein ligase which accepts ubiquitin from specific E2 ubiquitin-conjugating enzymes, and transfers it to substrates, generally promoting their degradation by the proteasome. Independently of its E3 ubiquitin-protein ligase activity, acts as an inhibitor of CPSF3 endonuclease activity by blocking CPSF3 active site. In Pongo abelii (Sumatran orangutan), this protein is E3 ubiquitin-protein ligase E3D (UBE3D).